The primary structure comprises 302 residues: Pantothenate synthetase (302 aa).

Position 47-54 (47-54) interacts with ATP; it reads MGALHEGH. Histidine 54 (proton donor) is an active-site residue. Position 79 (glutamine 79) interacts with (R)-pantoate. Glutamine 79 is a beta-alanine binding site. 165 to 168 provides a ligand contact to ATP; sequence GEKD. Glutamine 171 serves as a coordination point for (R)-pantoate. ATP is bound by residues valine 194 and 202–205; that span reads LSSR.

The protein belongs to the pantothenate synthetase family. In terms of assembly, homodimer.

Its subcellular location is the cytoplasm. The enzyme catalyses (R)-pantoate + beta-alanine + ATP = (R)-pantothenate + AMP + diphosphate + H(+). Its pathway is cofactor biosynthesis; (R)-pantothenate biosynthesis; (R)-pantothenate from (R)-pantoate and beta-alanine: step 1/1. Functionally, catalyzes the condensation of pantoate with beta-alanine in an ATP-dependent reaction via a pantoyl-adenylate intermediate. In Saccharopolyspora erythraea (strain ATCC 11635 / DSM 40517 / JCM 4748 / NBRC 13426 / NCIMB 8594 / NRRL 2338), this protein is Pantothenate synthetase.